The sequence spans 165 residues: Protein YELLOW LEAF 1, choloroplastic (165 aa).

A chloroplast-targeting transit peptide spans 1 to 51; the sequence is MPPLATMSSPGSLLLLTPAVYQGIGRNRGGQSQEGQSISSSRSLKTKLSVS. Residues 71–118 form a disordered region; the sequence is TQTARRKSFSGPTSPPSGSVKEKVRSPKLDDGGTGFPPFRFGGGGGGG. Residues 79 to 89 are compositionally biased toward low complexity; it reads FSGPTSPPSGS. Positions 90-101 are enriched in basic and acidic residues; that stretch reads VKEKVRSPKLDD.

Interacts with atpB. In terms of tissue distribution, highly expressed in leaves. Expressed in leaf sheaths. Expressed at low levels in stems.

It is found in the plastid. The protein localises to the chloroplast. Functionally, required for photosynthetic protein complex assembly in chloroplast thylakoid membranes during leaf development. Maintains the abundance of the core protein complex PsaA-PsaB of photosystem I (PSI) in the thylakoid membrane. May play a role in the efficient biogenesis of the chloroplast ATP synthase complex, possibly by interacting with the beta subunit atpB. The sequence is that of Protein YELLOW LEAF 1, choloroplastic from Oryza sativa subsp. japonica (Rice).